The chain runs to 142 residues: Large ribosomal subunit protein uL13 (142 aa).

This sequence belongs to the universal ribosomal protein uL13 family. In terms of assembly, part of the 50S ribosomal subunit.

This protein is one of the early assembly proteins of the 50S ribosomal subunit, although it is not seen to bind rRNA by itself. It is important during the early stages of 50S assembly. The polypeptide is Large ribosomal subunit protein uL13 (Photorhabdus laumondii subsp. laumondii (strain DSM 15139 / CIP 105565 / TT01) (Photorhabdus luminescens subsp. laumondii)).